Here is a 240-residue protein sequence, read N- to C-terminus: 1-(5-phosphoribosyl)-5-[(5-phosphoribosylamino)methylideneamino] imidazole-4-carboxamide isomerase (240 aa).

Asp8 serves as the catalytic Proton acceptor. Asp129 functions as the Proton donor in the catalytic mechanism.

Belongs to the HisA/HisF family.

It is found in the cytoplasm. It catalyses the reaction 1-(5-phospho-beta-D-ribosyl)-5-[(5-phospho-beta-D-ribosylamino)methylideneamino]imidazole-4-carboxamide = 5-[(5-phospho-1-deoxy-D-ribulos-1-ylimino)methylamino]-1-(5-phospho-beta-D-ribosyl)imidazole-4-carboxamide. It participates in amino-acid biosynthesis; L-histidine biosynthesis; L-histidine from 5-phospho-alpha-D-ribose 1-diphosphate: step 4/9. This is 1-(5-phosphoribosyl)-5-[(5-phosphoribosylamino)methylideneamino] imidazole-4-carboxamide isomerase from Listeria monocytogenes serotype 4b (strain F2365).